Reading from the N-terminus, the 680-residue chain is Lipase 1 (680 aa).

Residues 1–34 form the signal peptide; the sequence is MKSQNKYSIRKFSVGASSILIATLLFLSGGQAQA. Residues 35–290 constitute a propeptide that is removed on maturation; that stretch reads AEKQVNMGNS…AKAKDDQTNK (256 aa). Positions 82–259 are disordered; that stretch reads KNLHNDKTIS…PTKDNDKKNG (178 aa). The span at 84–111 shows a compositional bias: basic and acidic residues; that stretch reads LHNDKTISEENHRKTDDLNKDQLKDDKN. Polar residues-rich tracts occupy residues 125-138, 162-193, and 204-223; these read KNNN…NQGL, SQDS…SQRE, and QPQQ…FNNE. The segment covering 224 to 234 has biased composition (basic and acidic residues); that stretch reads QEVKPQKDEKT. Positions 235-246 are enriched in polar residues; sequence LSVSDLKNNQKS. The Nucleophile role is filled by S408. Residue D600 is the Charge relay system of the active site. D638 contributes to the Ca(2+) binding site. Catalysis depends on H639, which acts as the Charge relay system. Positions 641, 646, and 649 each coordinate Ca(2+).

The protein belongs to the AB hydrolase superfamily. Lipase family.

The protein localises to the secreted. The enzyme catalyses a triacylglycerol + H2O = a diacylglycerol + a fatty acid + H(+). This Staphylococcus aureus (strain Mu50 / ATCC 700699) protein is Lipase 1 (lip1).